Reading from the N-terminus, the 481-residue chain is Glutamyl-tRNA(Gln) amidotransferase subunit A (481 aa).

Residues lysine 74 and serine 149 each act as charge relay system in the active site. Serine 173 acts as the Acyl-ester intermediate in catalysis.

The protein belongs to the amidase family. GatA subfamily. As to quaternary structure, heterotrimer of A, B and C subunits.

It catalyses the reaction L-glutamyl-tRNA(Gln) + L-glutamine + ATP + H2O = L-glutaminyl-tRNA(Gln) + L-glutamate + ADP + phosphate + H(+). Its function is as follows. Allows the formation of correctly charged Gln-tRNA(Gln) through the transamidation of misacylated Glu-tRNA(Gln) in organisms which lack glutaminyl-tRNA synthetase. The reaction takes place in the presence of glutamine and ATP through an activated gamma-phospho-Glu-tRNA(Gln). The polypeptide is Glutamyl-tRNA(Gln) amidotransferase subunit A (Francisella philomiragia subsp. philomiragia (strain ATCC 25017 / CCUG 19701 / FSC 153 / O#319-036)).